We begin with the raw amino-acid sequence, 244 residues long: Osmotin-like protein OSM34 (244 aa).

A signal peptide spans 1–22 (MANLLVSTFIFSALLLISTATA). 8 cysteine pairs are disulfide-bonded: C31-C222, C72-C82, C87-C93, C138-C212, C143-C195, C151-C161, C165-C174, and C175-C182.

It belongs to the thaumatin family.

The chain is Osmotin-like protein OSM34 (OSM34) from Arabidopsis thaliana (Mouse-ear cress).